The chain runs to 514 residues: 2,3-bisphosphoglycerate-independent phosphoglycerate mutase (514 aa).

Residues Asp-14 and Ser-64 each coordinate Mn(2+). Residue Ser-64 is the Phosphoserine intermediate of the active site. Residues His-125, 155-156 (RD), Arg-187, Arg-193, 263-266 (RADR), and Lys-336 contribute to the substrate site. Mn(2+)-binding residues include Asp-403, His-407, Asp-444, His-445, and His-463.

It belongs to the BPG-independent phosphoglycerate mutase family. In terms of assembly, monomer. Mn(2+) is required as a cofactor.

The catalysed reaction is (2R)-2-phosphoglycerate = (2R)-3-phosphoglycerate. Its pathway is carbohydrate degradation; glycolysis; pyruvate from D-glyceraldehyde 3-phosphate: step 3/5. Catalyzes the interconversion of 2-phosphoglycerate and 3-phosphoglycerate. The protein is 2,3-bisphosphoglycerate-independent phosphoglycerate mutase of Shewanella baltica (strain OS195).